We begin with the raw amino-acid sequence, 453 residues long: Glutamyl-tRNA reductase (453 aa).

Residues 52-55 (TCNR), S105, 110-112 (EDQ), and Q116 each bind substrate. C53 acts as the Nucleophile in catalysis. 184 to 189 (GAGEMA) serves as a coordination point for NADP(+). Residues 413 to 424 (PGLEPEPTELPT) show a composition bias toward low complexity. The disordered stretch occupies residues 413–453 (PGLEPEPTELPTVPDGPEGVPEELRERMSSGMLEQFSTNDD).

The protein belongs to the glutamyl-tRNA reductase family. In terms of assembly, homodimer.

It carries out the reaction (S)-4-amino-5-oxopentanoate + tRNA(Glu) + NADP(+) = L-glutamyl-tRNA(Glu) + NADPH + H(+). It participates in porphyrin-containing compound metabolism; protoporphyrin-IX biosynthesis; 5-aminolevulinate from L-glutamyl-tRNA(Glu): step 1/2. Its function is as follows. Catalyzes the NADPH-dependent reduction of glutamyl-tRNA(Glu) to glutamate 1-semialdehyde (GSA). This chain is Glutamyl-tRNA reductase, found in Natronomonas pharaonis (strain ATCC 35678 / DSM 2160 / CIP 103997 / JCM 8858 / NBRC 14720 / NCIMB 2260 / Gabara) (Halobacterium pharaonis).